Reading from the N-terminus, the 753-residue chain is 5-methyltetrahydropteroyltriglutamate--homocysteine methyltransferase (753 aa).

Residues 17 to 20 and lysine 117 contribute to the 5-methyltetrahydropteroyltri-L-glutamate site; that span reads RELK. Residues 431–433 and glutamate 484 each bind L-homocysteine; that span reads IGS. Residues 431-433 and glutamate 484 contribute to the L-methionine site; that span reads IGS. 5-methyltetrahydropteroyltri-L-glutamate-binding positions include 515–516 and tryptophan 561; that span reads RC. Aspartate 599 contributes to the L-homocysteine binding site. Aspartate 599 lines the L-methionine pocket. Glutamate 605 contributes to the 5-methyltetrahydropteroyltri-L-glutamate binding site. The Zn(2+) site is built by histidine 641, cysteine 643, and glutamate 665. Histidine 694 serves as the catalytic Proton donor. Cysteine 726 serves as a coordination point for Zn(2+).

It belongs to the vitamin-B12 independent methionine synthase family. Zn(2+) is required as a cofactor.

It catalyses the reaction 5-methyltetrahydropteroyltri-L-glutamate + L-homocysteine = tetrahydropteroyltri-L-glutamate + L-methionine. It functions in the pathway amino-acid biosynthesis; L-methionine biosynthesis via de novo pathway; L-methionine from L-homocysteine (MetE route): step 1/1. Functionally, catalyzes the transfer of a methyl group from 5-methyltetrahydrofolate to homocysteine resulting in methionine formation. The polypeptide is 5-methyltetrahydropteroyltriglutamate--homocysteine methyltransferase (Escherichia coli O1:K1 / APEC).